A 129-amino-acid chain; its full sequence is Small ribosomal subunit protein eS6 (129 aa).

It belongs to the eukaryotic ribosomal protein eS6 family.

In Archaeoglobus fulgidus (strain ATCC 49558 / DSM 4304 / JCM 9628 / NBRC 100126 / VC-16), this protein is Small ribosomal subunit protein eS6.